An 85-amino-acid polypeptide reads, in one-letter code: Small ribosomal subunit protein bS20 (85 aa).

The protein belongs to the bacterial ribosomal protein bS20 family.

Binds directly to 16S ribosomal RNA. This is Small ribosomal subunit protein bS20 from Borrelia garinii subsp. bavariensis (strain ATCC BAA-2496 / DSM 23469 / PBi) (Borreliella bavariensis).